A 474-amino-acid polypeptide reads, in one-letter code: Vitamin D-binding protein (474 aa).

The first 16 residues, 1–16 (MKRVLVLLLAVAFGHA), serve as a signal peptide directing secretion. Albumin domains lie at 17–208 (LERG…QLKH), 209–394 (LSLL…LLKK), and 395–474 (ELSS…KNIL). Intrachain disulfides connect cysteine 29/cysteine 75, cysteine 74/cysteine 83, cysteine 96/cysteine 112, cysteine 111/cysteine 122, cysteine 145/cysteine 190, cysteine 189/cysteine 198, cysteine 220/cysteine 266, cysteine 265/cysteine 273, cysteine 286/cysteine 300, cysteine 299/cysteine 311, cysteine 335/cysteine 376, cysteine 375/cysteine 384, cysteine 407/cysteine 453, and cysteine 452/cysteine 462.

It belongs to the ALB/AFP/VDB family. Associates with membrane-bound immunoglobulin on the surface of B-lymphocytes and with IgG Fc receptor on the membranes of T-lymphocytes. Interacts with LRP2; the interaction is required for renal uptake of GC in complex with 25-hydroxyvitamin D3. Post-translationally, allele GC*1S is O-glycosylated at Thr-436. The trisaccharide sugar moiety can be modified by the successive removal of neuraminic acid and galactose leaving an O-mceeN-acetyl-galactosamine. This conversion is thought to produce a macrophage-activating factor (Gc-MAF). Only a minor proportion of plasma GC is O-glycosylated. The potential N-glycosylation site predicted at Asn-288 is thought to be nonglycosylated. In terms of tissue distribution, expressed in the liver. Found in plasma, ascites, cerebrospinal fluid and urine.

It localises to the secreted. Functionally, involved in vitamin D transport and storage, scavenging of extracellular G-actin, enhancement of the chemotactic activity of C5 alpha for neutrophils in inflammation and macrophage activation. This is Vitamin D-binding protein (GC) from Homo sapiens (Human).